Consider the following 136-residue polypeptide: Antistasin (136 aa).

Positions 1–17 (MIKLAILLLFTVAIVRC) are cleaved as a signal peptide. Gln18 is subject to Pyrrolidone carboxylic acid. Intrachain disulfides connect Cys25–Cys36, Cys30–Cys43, Cys45–Cys65, Cys50–Cys68, Cys54–Cys70, Cys79–Cys90, Cys84–Cys97, Cys99–Cys120, Cys105–Cys123, and Cys109–Cys125. The 26-residue stretch at 45 to 70 (CSGVRCRMHCPHGFQRSRYGCEFCKC) folds into the Antistasin-like 1 domain. Positions 100–125 (KIDINCRKTCPNGLKRDKLGCEYCEC) constitute an Antistasin-like 2 domain. Residues 114–117 (KRDK) and 128–135 (KRKLIPRL) contribute to the heparin site.

This sequence belongs to the protease inhibitor I15 (antistasin) family.

It is found in the secreted. In terms of biological role, this highly disulfide-bonded protein is a potent inhibitor of factor Xa. May have therapeutic utility as an anticoagulant. Also exhibits a strong metastatic activity. The sequence is that of Antistasin from Haementeria officinalis (Mexican leech).